A 278-amino-acid chain; its full sequence is Nucleotide-binding protein Tbd_0529 (278 aa).

8-15 (GLSGSGKS) lines the ATP pocket. Position 57–60 (57–60 (DARS)) interacts with GTP.

This sequence belongs to the RapZ-like family.

Displays ATPase and GTPase activities. This Thiobacillus denitrificans (strain ATCC 25259 / T1) protein is Nucleotide-binding protein Tbd_0529.